Consider the following 269-residue polypeptide: MESLNILISNDDGVFAEGIRALAKSALKKGHKVTVVCPDQERSATGHGLTLQSPLRVERADELFDKGIKAWGCSGTPADCVKLALSELLDKKPDLVLSGINHGPNLGTDIFCSGTVAAAMEGTLENVPSMAISVASFKWKNFEFAGEIAMNIAEQAIKDSWPKSLLLNLNIPPCERNKIKELSWTRLSIRKYKNQFSKREDPRGDDYYWLAGEAVLDLKSKGDGPKNWPSDVSQIQENKISLTPVEPDLFWRGSIDVLPKINTSFINAS.

A divalent metal cation-binding residues include Asp-11, Asp-12, Ser-43, and Asn-101.

Belongs to the SurE nucleotidase family. A divalent metal cation serves as cofactor.

The protein resides in the cytoplasm. It catalyses the reaction a ribonucleoside 5'-phosphate + H2O = a ribonucleoside + phosphate. Its function is as follows. Nucleotidase that shows phosphatase activity on nucleoside 5'-monophosphates. The polypeptide is 5'-nucleotidase SurE (Prochlorococcus marinus subsp. pastoris (strain CCMP1986 / NIES-2087 / MED4)).